The sequence spans 263 residues: Kallikrein 1-related peptidase b24 (263 aa).

An N-terminal signal peptide occupies residues 1 to 17; the sequence is MWFLILFLALSLGGIDA. Residues 18-24 constitute a propeptide, activation peptide; sequence APPVQSR. Positions 25–260 constitute a Peptidase S1 domain; that stretch reads VVGGFKCEKN…FASWIKDTMA (236 aa). 5 cysteine pairs are disulfide-bonded: C31–C175, C50–C66, C154–C221, C186–C200, and C211–C236. The Charge relay system role is filled by H65. N69 and N105 each carry an N-linked (GlcNAc...) asparagine glycan. D122 acts as the Charge relay system in catalysis. N185 carries an N-linked (GlcNAc...) asparagine glycan. S215 serves as the catalytic Charge relay system.

Belongs to the peptidase S1 family. Kallikrein subfamily.

The catalysed reaction is Preferential cleavage of Arg-|-Xaa bonds in small molecule substrates. Highly selective action to release kallidin (lysyl-bradykinin) from kininogen involves hydrolysis of Met-|-Xaa or Leu-|-Xaa.. Functionally, glandular kallikreins cleave Met-Lys and Arg-Ser bonds in kininogen to release Lys-bradykinin. In Mus musculus (Mouse), this protein is Kallikrein 1-related peptidase b24 (Klk1b24).